Reading from the N-terminus, the 536-residue chain is 2,3-bisphosphoglycerate-independent phosphoglycerate mutase (536 aa).

Residues D19 and S69 each contribute to the Mn(2+) site. The active-site Phosphoserine intermediate is the S69. Residues H130, 160–161 (RD), R192, R198, 262–265 (RPDR), and K335 each bind substrate. D402, H406, D443, H444, and H461 together coordinate Mn(2+).

The protein belongs to the BPG-independent phosphoglycerate mutase family. As to quaternary structure, monomer. Requires Mn(2+) as cofactor.

It catalyses the reaction (2R)-2-phosphoglycerate = (2R)-3-phosphoglycerate. It functions in the pathway carbohydrate degradation; glycolysis; pyruvate from D-glyceraldehyde 3-phosphate: step 3/5. Functionally, catalyzes the interconversion of 2-phosphoglycerate and 3-phosphoglycerate. This is 2,3-bisphosphoglycerate-independent phosphoglycerate mutase from Gloeobacter violaceus (strain ATCC 29082 / PCC 7421).